A 285-amino-acid polypeptide reads, in one-letter code: Shikimate dehydrogenase (NADP(+)) (285 aa).

Shikimate is bound by residues 20–22 and S67; that span reads SIS. K71 functions as the Proton acceptor in the catalytic mechanism. An NADP(+)-binding site is contributed by E83. The shikimate site is built by N92 and D107. Residues 129-133 and M227 contribute to the NADP(+) site; that span reads GAGGA. Position 229 (Y229) interacts with shikimate. G250 provides a ligand contact to NADP(+).

The protein belongs to the shikimate dehydrogenase family. In terms of assembly, homodimer.

The enzyme catalyses shikimate + NADP(+) = 3-dehydroshikimate + NADPH + H(+). The protein operates within metabolic intermediate biosynthesis; chorismate biosynthesis; chorismate from D-erythrose 4-phosphate and phosphoenolpyruvate: step 4/7. In terms of biological role, involved in the biosynthesis of the chorismate, which leads to the biosynthesis of aromatic amino acids. Catalyzes the reversible NADPH linked reduction of 3-dehydroshikimate (DHSA) to yield shikimate (SA). The sequence is that of Shikimate dehydrogenase (NADP(+)) from Streptococcus gordonii (strain Challis / ATCC 35105 / BCRC 15272 / CH1 / DL1 / V288).